The sequence spans 399 residues: MQMYTDGERVFISRNYRVEGISKKDWIEKGEKKVVWQSAKLSETPTLLTNTRFYLFGAGATYLMRMDRRSGQTEEIDFEKEIVDITSDLRDVYFITHEGIYKLDAERFEKAKIERLAVSDILEKPIKTLDMIEDYLYVCAGNWLYKIRKDGEKVMEKALVDVRKVLADYEGPVVITEDKVIYFTDELDTLANGFYEGEYIKAEHGAYQTYLLSSTHFSVFGRTGERIAHVEYEHYRTFTEGLNHIYYYDEKEGDITYAFKRDLLGDDFINIDLVDTIALIFASLMAVEKAGHRVRIKEKRGFIDVDVNHKHVDMEKIFLTLSKYFPEIFYLYKNPGYYDEIDNFAQNYDLFIKEGDQVKLNLDLLEKFSEIRQDFKTLQEDIVRDILPSRADFFQSSTM.

This is an uncharacterized protein from Aquifex aeolicus (strain VF5).